We begin with the raw amino-acid sequence, 204 residues long: Large ribosomal subunit protein eL15 (204 aa).

The N-myristoyl glycine moiety is linked to residue Gly2. Ser34 carries the post-translational modification Phosphoserine. Lys83 is covalently cross-linked (Glycyl lysine isopeptide (Lys-Gly) (interchain with G-Cter in SUMO2)). Ser97 and Ser100 each carry phosphoserine. The tract at residues 165–186 (TSAGRKSRGLGKGHKFHHTIGG) is disordered. Positions 169–182 (RKSRGLGKGHKFHH) are enriched in basic residues.

This sequence belongs to the eukaryotic ribosomal protein eL15 family. In terms of assembly, component of the large ribosomal subunit. Interacts with IFIT1 (via TPR repeats 1-4).

The protein resides in the cytoplasm. Component of the large ribosomal subunit. The ribosome is a large ribonucleoprotein complex responsible for the synthesis of proteins in the cell. This is Large ribosomal subunit protein eL15 (RPL15) from Bos taurus (Bovine).